The chain runs to 257 residues: NAD-capped RNA hydrolase NudC (257 aa).

Arg-69 is a substrate binding site. Cys-98 and Cys-101 together coordinate Zn(2+). Glu-111 lines the substrate pocket. Residues Cys-116 and Cys-119 each contribute to the Zn(2+) site. Tyr-124 is a substrate binding site. A Nudix hydrolase domain is found at 125-248 (PQIAPCIIVA…TVARRLIEDT (124 aa)). Ala-158, Glu-174, and Glu-178 together coordinate a divalent metal cation. The short motif at 159–180 (GFVEVGETLEQAVAREVMEESG) is the Nudix box element. 192–199 (QPWPFPQS) contacts substrate. A divalent metal cation is bound at residue Glu-219. Position 241 (Ala-241) interacts with substrate.

It belongs to the Nudix hydrolase family. NudC subfamily. In terms of assembly, homodimer. Mg(2+) serves as cofactor. Mn(2+) is required as a cofactor. The cofactor is Zn(2+).

It carries out the reaction a 5'-end NAD(+)-phospho-ribonucleoside in mRNA + H2O = a 5'-end phospho-adenosine-phospho-ribonucleoside in mRNA + beta-nicotinamide D-ribonucleotide + 2 H(+). The catalysed reaction is NAD(+) + H2O = beta-nicotinamide D-ribonucleotide + AMP + 2 H(+). The enzyme catalyses NADH + H2O = reduced beta-nicotinamide D-ribonucleotide + AMP + 2 H(+). MRNA decapping enzyme that specifically removes the nicotinamide adenine dinucleotide (NAD) cap from a subset of mRNAs by hydrolyzing the diphosphate linkage to produce nicotinamide mononucleotide (NMN) and 5' monophosphate mRNA. The NAD-cap is present at the 5'-end of some mRNAs and stabilizes RNA against 5'-processing. Has preference for mRNAs with a 5'-end purine. Catalyzes the hydrolysis of a broad range of dinucleotide pyrophosphates. The polypeptide is NAD-capped RNA hydrolase NudC (Salmonella agona (strain SL483)).